Consider the following 143-residue polypeptide: MRVLVQRVSSAAVRVDGRVVGAIRPDGQGLVAFVGVTHGDDLDKARRLAEKLWNLRVLAGEKSASDMHAPILVISQFTLYADTAKGRRPSWNAAAPGAVAQPLIAAFAAALRQLGAHVEAGVFGAHMQVELVNDGPVTVMLEG.

The short motif at 135 to 136 is the Gly-cisPro motif, important for rejection of L-amino acids element; sequence GP.

Belongs to the DTD family. As to quaternary structure, homodimer.

The protein localises to the cytoplasm. It catalyses the reaction glycyl-tRNA(Ala) + H2O = tRNA(Ala) + glycine + H(+). The enzyme catalyses a D-aminoacyl-tRNA + H2O = a tRNA + a D-alpha-amino acid + H(+). Its function is as follows. An aminoacyl-tRNA editing enzyme that deacylates mischarged D-aminoacyl-tRNAs. Also deacylates mischarged glycyl-tRNA(Ala), protecting cells against glycine mischarging by AlaRS. Acts via tRNA-based rather than protein-based catalysis; rejects L-amino acids rather than detecting D-amino acids in the active site. By recycling D-aminoacyl-tRNA to D-amino acids and free tRNA molecules, this enzyme counteracts the toxicity associated with the formation of D-aminoacyl-tRNA entities in vivo and helps enforce protein L-homochirality. The polypeptide is D-aminoacyl-tRNA deacylase (Mycobacterium bovis (strain BCG / Pasteur 1173P2)).